The following is a 422-amino-acid chain: Serine--tRNA ligase (422 aa).

An L-serine-binding site is contributed by 230-232 (TAE). ATP is bound at residue 261–263 (RNE). Glu-284 serves as a coordination point for L-serine. ATP is bound at residue 347-350 (EVSS). Ser-383 is a binding site for L-serine.

Belongs to the class-II aminoacyl-tRNA synthetase family. Type-1 seryl-tRNA synthetase subfamily. As to quaternary structure, homodimer. The tRNA molecule binds across the dimer.

The protein resides in the cytoplasm. The enzyme catalyses tRNA(Ser) + L-serine + ATP = L-seryl-tRNA(Ser) + AMP + diphosphate + H(+). It carries out the reaction tRNA(Sec) + L-serine + ATP = L-seryl-tRNA(Sec) + AMP + diphosphate + H(+). The protein operates within aminoacyl-tRNA biosynthesis; selenocysteinyl-tRNA(Sec) biosynthesis; L-seryl-tRNA(Sec) from L-serine and tRNA(Sec): step 1/1. Its function is as follows. Catalyzes the attachment of serine to tRNA(Ser). Is also able to aminoacylate tRNA(Sec) with serine, to form the misacylated tRNA L-seryl-tRNA(Sec), which will be further converted into selenocysteinyl-tRNA(Sec). In Herpetosiphon aurantiacus (strain ATCC 23779 / DSM 785 / 114-95), this protein is Serine--tRNA ligase.